A 202-amino-acid polypeptide reads, in one-letter code: MAVFKGITPEQIDAICVGQYAGVDEVGRGPLIGNVVTAAVILDPHNPIVGLNDSKKLSEKKRELLFNQIQEKALSVSVGAATPAEIDEINILHATMMAMQRAVAGLSIKPTSVLVDGNRCPDFGMQSHAIIKGDGLIDAISAASIVAKVVRDREMEALAAQYPEYGFEKHKGYPTKAHFEALAKYGILAEHRKSFRPVREAM.

Positions 18-202 constitute an RNase H type-2 domain; that stretch reads GQYAGVDEVG…KSFRPVREAM (185 aa). A divalent metal cation-binding residues include D24, E25, and D116.

The protein belongs to the RNase HII family. Mn(2+) serves as cofactor. Mg(2+) is required as a cofactor.

Its subcellular location is the cytoplasm. The catalysed reaction is Endonucleolytic cleavage to 5'-phosphomonoester.. Its function is as follows. Endonuclease that specifically degrades the RNA of RNA-DNA hybrids. This Shewanella piezotolerans (strain WP3 / JCM 13877) protein is Ribonuclease HII.